The chain runs to 157 residues: Protein Smg homolog (157 aa).

It belongs to the Smg family.

This chain is Protein Smg homolog, found in Aeromonas hydrophila subsp. hydrophila (strain ATCC 7966 / DSM 30187 / BCRC 13018 / CCUG 14551 / JCM 1027 / KCTC 2358 / NCIMB 9240 / NCTC 8049).